The sequence spans 283 residues: MEVNKTTESLFSAKVEHNHAQAESHEPRDQRDVKVFSLGGKSSSKQEKLDHGSGRTSSRHETSRSSKEGSIEDKSAEVSSREEEEENRDGFLSGGNLTAGVAFTDTPMAVASEVMIETNAVTMSQIDLQWVEQLVLSTVESLLVADVDGKQLVEIVLDNNSTVPEAFCGANLTLVQTGEDVAVTFSNFVDQDQVAEAMQLVQQNPEQLTSLVESLKSRQLNLTELVVGNVAVSLPVLEKVETPLHMIAATIRHHDQEGDQEGEGRQEQHQGRQQEKKLEEAQI.

The span at 1–10 shows a compositional bias: polar residues; the sequence is MEVNKTTESL. Disordered regions lie at residues 1–96 and 255–283; these read MEVN…SGGN and DQEG…EAQI. 2 stretches are compositionally biased toward basic and acidic residues: residues 14–34 and 44–81; these read KVEH…RDVK and SKQE…VSSR.

This sequence belongs to the chlamydial CPn_0705/CT_671/TC_0042 family.

This is an uncharacterized protein from Chlamydia muridarum (strain MoPn / Nigg).